The sequence spans 115 residues: MAAPSLESNWLVQIPNQSGSHVAQARKDSFAEHMSYNKTHIEAGRMVLAGPLVEALPQDGQPPVITGSIMVWKATAGEREMLDKWLSDNPFATSGVWDLTKMECTPFLCGVRKGL.

Part of the gene cluster that mediates the biosynthesis of xenovulene A, an unusual meroterpenoid that has potent inhibitory effects on the human gamma-aminobutyrate A (GABAA) benzodiazepine receptor. The first step of xenovulene A biosynthesis is the biosynthesis of 3-methylorcinaldehyde performed by the non-reducing polyketide synthase aspks1. The salicylate hydroxylase asL1 then catalyzes the oxidative dearomatization of 3-methylorcinaldehyde to yield a dearomatized hydroxycyclohexadione. The 2-oxoglutarate-dependent dioxygenase asL3 further catalyzes the oxidative ring expansion to provide the first tropolone metabolite. The cytochrome P450 monooxygenase asR2 allows the synthesis of tropolone hemiacetal. In parallel, a previously unrecognised class of terpene cyclase, asR6, produces alpha-humulene from farnesylpyrophosphate (FPP). The putative Diels-Alderase asR5 probably catalyzes the formation of the tropolone-humulene skeleton by linking humulene and the polyketide moiety. Oxidative-ring contractions catalyzed by asL4 and asL6 then processively remove carbon atoms from the polyketide to yield xenovulene A. The chain is Xenovulene A biosynthesis cluster protein asL2 from Sarocladium schorii (Acremonium strictum (strain IMI 501407)).